We begin with the raw amino-acid sequence, 253 residues long: Phosphate import ATP-binding protein PstB (253 aa).

An ABC transporter domain is found at 7-248; it reads IKVRDLNLYY…PRDRRTEDYI (242 aa). ATP is bound at residue 39–46; it reads GPSGCGKS.

It belongs to the ABC transporter superfamily. Phosphate importer (TC 3.A.1.7) family. In terms of assembly, the complex is composed of two ATP-binding proteins (PstB), two transmembrane proteins (PstC and PstA) and a solute-binding protein (PstS).

The protein localises to the cell membrane. It catalyses the reaction phosphate(out) + ATP + H2O = ADP + 2 phosphate(in) + H(+). Functionally, part of the ABC transporter complex PstSACB involved in phosphate import. Responsible for energy coupling to the transport system. The protein is Phosphate import ATP-binding protein PstB of Carboxydothermus hydrogenoformans (strain ATCC BAA-161 / DSM 6008 / Z-2901).